Here is a 301-residue protein sequence, read N- to C-terminus: GTPase Era (301 aa).

One can recognise an Era-type G domain in the interval Y7 to E175. The G1 stretch occupies residues G15–S22. G15–S22 contacts GTP. Residues Q41–H45 are G2. The segment at D62–G65 is G3. GTP-binding positions include D62–L66 and N124–D127. Positions N124–D127 are G4. Positions I154–A156 are G5. In terms of domain architecture, KH type-2 spans L206–S283.

Belongs to the TRAFAC class TrmE-Era-EngA-EngB-Septin-like GTPase superfamily. Era GTPase family. Monomer.

The protein resides in the cytoplasm. It is found in the cell inner membrane. Functionally, an essential GTPase that binds both GDP and GTP, with rapid nucleotide exchange. Plays a role in 16S rRNA processing and 30S ribosomal subunit biogenesis and possibly also in cell cycle regulation and energy metabolism. This Escherichia coli O1:K1 / APEC protein is GTPase Era.